The following is a 444-amino-acid chain: Probable glycine dehydrogenase (decarboxylating) subunit 1 (444 aa).

This sequence belongs to the GcvP family. N-terminal subunit subfamily. In terms of assembly, the glycine cleavage system is composed of four proteins: P, T, L and H. In this organism, the P 'protein' is a heterodimer of two subunits.

The enzyme catalyses N(6)-[(R)-lipoyl]-L-lysyl-[glycine-cleavage complex H protein] + glycine + H(+) = N(6)-[(R)-S(8)-aminomethyldihydrolipoyl]-L-lysyl-[glycine-cleavage complex H protein] + CO2. In terms of biological role, the glycine cleavage system catalyzes the degradation of glycine. The P protein binds the alpha-amino group of glycine through its pyridoxal phosphate cofactor; CO(2) is released and the remaining methylamine moiety is then transferred to the lipoamide cofactor of the H protein. This chain is Probable glycine dehydrogenase (decarboxylating) subunit 1, found in Prosthecochloris aestuarii (strain DSM 271 / SK 413).